The chain runs to 403 residues: MARCPACASPRTVFHEELGTLSIAHMDCDAFYASVEKRDDPSLRDLPVIIGGGKRGVVTTACYIARMSGAKSAMPMFKALKLCPDAVVIKPNFAKYKEESRRIHEKLDRLTPLIQPLSLDEAWIDLTGTERLHGATPAQMLARLQAEIERDIGLTVSVGLAPNKFLAKIASELDKPRGFSAIGAAEAQSFLANKPVNILPGVGPATVASLAEIGLRTVGDIAAADLKLLANRLGSGGMRLHRLAHGQDSRIVDPDQARKTISAETTFNDDLHKREDLEDELWPLCEKVAKQARQEGVAGRVATLKLRTPDFKIHTRRRTLAVPTQTARTLFQVARELLSAEPRGLAYRLIGAGLTEFVDADTAGADMFADEERRALKSETAIDALRGKFGAAAVVTGRALKGR.

The 181-residue stretch at 23 to 203 folds into the UmuC domain; sequence IAHMDCDAFY…KPVNILPGVG (181 aa). Residues aspartate 27 and aspartate 120 each coordinate Mg(2+). Glutamate 121 is a catalytic residue.

The protein belongs to the DNA polymerase type-Y family. In terms of assembly, monomer. The cofactor is Mg(2+).

The protein localises to the cytoplasm. It catalyses the reaction DNA(n) + a 2'-deoxyribonucleoside 5'-triphosphate = DNA(n+1) + diphosphate. Poorly processive, error-prone DNA polymerase involved in untargeted mutagenesis. Copies undamaged DNA at stalled replication forks, which arise in vivo from mismatched or misaligned primer ends. These misaligned primers can be extended by PolIV. Exhibits no 3'-5' exonuclease (proofreading) activity. May be involved in translesional synthesis, in conjunction with the beta clamp from PolIII. The sequence is that of DNA polymerase IV from Caulobacter vibrioides (strain ATCC 19089 / CIP 103742 / CB 15) (Caulobacter crescentus).